A 144-amino-acid polypeptide reads, in one-letter code: Maximins 7/H13 (144 aa).

The first 18 residues, 1–18 (MNFKYIVAVSFLIASAYA), serve as a signal peptide directing secretion. Positions 19–43 (RSEENDEQSLSQRDVLEEESLREIR) are excised as a propeptide. Asparagine amide is present on Asn70. The propeptide occupies 74–123 (TAEDHEVMKRLEAVMRDLDSLDYPEEAAERETRGFNQEEIANLFTKKEKR). Position 143 is a leucine amide (Leu143).

It belongs to the bombinin family. In terms of tissue distribution, expressed by the skin glands.

It localises to the secreted. Maximin-7 shows antimicrobial activity against bacteria and against the fungus C.albicans. It has little hemolytic activity. Functionally, maximin-H13 shows antimicrobial activity against bacteria and against the fungus C.albicans. Shows strong hemolytic activity. The protein is Maximins 7/H13 of Bombina maxima (Giant fire-bellied toad).